The sequence spans 305 residues: Protoheme IX farnesyltransferase (305 aa).

9 helical membrane-spanning segments follow: residues 31–51 (VMSLVIFTGFVGMWLAPYSVH), 52–72 (PFIAGIAVVCIALGAGSAGAI), 96–118 (VIESDEALSFGLITGFFAVFFMA), 123–145 (LLASFLLLFTIFYYICIYTIWLK), 151–171 (NIVIGGVSGALPPVIGYAAVS), 179–199 (IILFLIIFIWTPPHSWALALF), 225–245 (ILIYSILLFIVSLMPFFIGMN), 247–267 (FIYLIISGILGVVFLYYAGSL), and 281–301 (FAYSIFYLFFIFLLLYSTNTI).

Belongs to the UbiA prenyltransferase family. Protoheme IX farnesyltransferase subfamily.

It is found in the cell inner membrane. It catalyses the reaction heme b + (2E,6E)-farnesyl diphosphate + H2O = Fe(II)-heme o + diphosphate. It participates in porphyrin-containing compound metabolism; heme O biosynthesis; heme O from protoheme: step 1/1. In terms of biological role, converts heme B (protoheme IX) to heme O by substitution of the vinyl group on carbon 2 of heme B porphyrin ring with a hydroxyethyl farnesyl side group. The sequence is that of Protoheme IX farnesyltransferase from Rickettsia rickettsii (strain Iowa).